The following is a 660-amino-acid chain: Bifunctional polymyxin resistance protein ArnA (660 aa).

The tract at residues 1 to 304 (MKAVVFAYHD…TLGLVEGSRL (304 aa)) is formyltransferase ArnAFT. The active-site Proton donor; for formyltransferase activity is the His104. Residues Arg114 and 136 to 140 (VAKAD) contribute to the (6R)-10-formyltetrahydrofolate site. Residues 314 to 660 (RRTRVLILGV…RTVDIVEKSS (347 aa)) are dehydrogenase ArnADH. Residues Asp347 and 368 to 369 (DI) each bind NAD(+). Residues Ala393, Tyr398, and 432–433 (TS) contribute to the UDP-alpha-D-glucuronate site. Glu434 serves as the catalytic Proton acceptor; for decarboxylase activity. UDP-alpha-D-glucuronate contacts are provided by residues Arg460, Asn492, 526–535 (KLIDGGKQKR), and Tyr613. Catalysis depends on Arg619, which acts as the Proton donor; for decarboxylase activity.

In the N-terminal section; belongs to the Fmt family. UDP-L-Ara4N formyltransferase subfamily. It in the C-terminal section; belongs to the NAD(P)-dependent epimerase/dehydratase family. UDP-glucuronic acid decarboxylase subfamily. In terms of assembly, homohexamer, formed by a dimer of trimers.

The catalysed reaction is UDP-alpha-D-glucuronate + NAD(+) = UDP-beta-L-threo-pentopyranos-4-ulose + CO2 + NADH. It catalyses the reaction UDP-4-amino-4-deoxy-beta-L-arabinose + (6R)-10-formyltetrahydrofolate = UDP-4-deoxy-4-formamido-beta-L-arabinose + (6S)-5,6,7,8-tetrahydrofolate + H(+). The protein operates within nucleotide-sugar biosynthesis; UDP-4-deoxy-4-formamido-beta-L-arabinose biosynthesis; UDP-4-deoxy-4-formamido-beta-L-arabinose from UDP-alpha-D-glucuronate: step 1/3. Its pathway is nucleotide-sugar biosynthesis; UDP-4-deoxy-4-formamido-beta-L-arabinose biosynthesis; UDP-4-deoxy-4-formamido-beta-L-arabinose from UDP-alpha-D-glucuronate: step 3/3. It functions in the pathway bacterial outer membrane biogenesis; lipopolysaccharide biosynthesis. Its function is as follows. Bifunctional enzyme that catalyzes the oxidative decarboxylation of UDP-glucuronic acid (UDP-GlcUA) to UDP-4-keto-arabinose (UDP-Ara4O) and the addition of a formyl group to UDP-4-amino-4-deoxy-L-arabinose (UDP-L-Ara4N) to form UDP-L-4-formamido-arabinose (UDP-L-Ara4FN). The modified arabinose is attached to lipid A and is required for resistance to polymyxin and cationic antimicrobial peptides. This is Bifunctional polymyxin resistance protein ArnA from Escherichia fergusonii (strain ATCC 35469 / DSM 13698 / CCUG 18766 / IAM 14443 / JCM 21226 / LMG 7866 / NBRC 102419 / NCTC 12128 / CDC 0568-73).